A 436-amino-acid chain; its full sequence is Putative ankyrin repeat protein FPV026 (436 aa).

6 ANK repeats span residues 63–92 (EGIRVLRMAIKFERIDIIKILLEYGVNVNE), 101–130 (TCYSVLHFAVDIGNKDIVSILLYAGADVNN), 135–164 (LRNTPLHLAIQQKNTDIAKLLLDSGADQNI), 168–197 (NGNIPIQIAVTYNDEKMVNILLQYSPNLEI), 201–230 (NGRTVLHNAVLDKNINIVSLLLENGALVDS), and 234–266 (EGYTILLSSVNRTDPFIIKMLLHRGANPFFLNI). The region spanning 409–436 (TSTITNLPYEVIYIIVEKMTNKELCEIR) is the F-box domain.

The chain is Putative ankyrin repeat protein FPV026 from Fowlpox virus (strain NVSL) (FPV).